Reading from the N-terminus, the 782-residue chain is Tripartite terminase subunit 1 (782 aa).

The segment at 190–218 (CLQCYEELAAVPNQGRSILKRLRGLLCDH) adopts a C3H1-type zinc-finger fold. 666–673 (YNEAFGKE) is an ATP binding site. Residues 727 to 740 (APPPPAAPSPPPAE) are compositionally biased toward pro residues. The interval 727–754 (APPPPAAPSPPPAEPATTAGASRKRPAV) is disordered.

This sequence belongs to the herpesviridae TRM1 protein family. In terms of assembly, associates with TRM2 and TRM3 to form the tripartite terminase complex. Interacts with portal protein.

It is found in the host nucleus. In terms of biological role, component of the molecular motor that translocates viral genomic DNA in empty capsid during DNA packaging. Forms a tripartite terminase complex together with TRM2 and TRM3 in the host cytoplasm. Once the complex reaches the host nucleus, it interacts with the capsid portal vertex. This portal forms a ring in which genomic DNA is translocated into the capsid. TRM1 carries an endonuclease activity that plays an important role for the cleavage of concatemeric viral DNA into unit length genomes. The polypeptide is Tripartite terminase subunit 1 (Tupaiid herpesvirus (strain 2) (TuHV-2)).